A 134-amino-acid polypeptide reads, in one-letter code: Fatty acid-binding protein, muscle (134 aa).

(9Z)-octadecenoate contacts are provided by residues arginine 109 and 129 to 131 (RIY).

It belongs to the calycin superfamily. Fatty-acid binding protein (FABP) family. In terms of assembly, monomer. As to expression, adult flight muscle.

It is found in the cytoplasm. In terms of biological role, binds fatty acids in a 1:1 molar ratio. The sequence is that of Fatty acid-binding protein, muscle from Schistocerca gregaria (Desert locust).